The primary structure comprises 360 residues: MTTLLEQRSSANLWHRFGNWITSTENRMYVGWFGVLLIPTALTAAIVFILAFIAAPPVDVDGIREPVSGSLLYGNNIITATVVPTSAAIGLHLYPIWEAASLDEWLYNGGPYQMIVLHFLIAIYAYMGRQWELSYRLGMRPWIPVAFSAPVAAATAVLLIYPIGQGSFSDGMMLGISGTFNFMIVFSPEHNILMHPFHMIGVAGVFGGALFSAMHGSLVTSTLVRETSEVESANTGYKFGQEEETYNIVAAHGYFGRLIFQYASFNNSRSLHFFLAAWPVIGIWFAALGISTMSFNLNGFNFNNSILDHQGRTIDTWADLLNRANLGIEVMHERNAHNFPLDLASGEVQPIALTAPAIAS.

A run of 3 helical transmembrane segments spans residues 29–46, 118–133, and 142–156; these read YVGW…TAAI, HFLI…QWEL, and WIPV…AATA. Position 118 (His-118) interacts with chlorophyll a. Residue Tyr-126 coordinates pheophytin a. Residues Asp-170 and Glu-189 each contribute to the [CaMn4O5] cluster site. A helical transmembrane segment spans residues 197 to 218; it reads FHMIGVAGVFGGALFSAMHGSL. His-198 serves as a coordination point for chlorophyll a. Residues His-215 and 264-265 contribute to the a quinone site; that span reads SF. His-215 contacts Fe cation. His-272 serves as a coordination point for Fe cation. Residues 274 to 288 traverse the membrane as a helical segment; it reads FLAAWPVIGIWFAAL. 4 residues coordinate [CaMn4O5] cluster: His-332, Glu-333, Asp-342, and Ala-344. A propeptide spanning residues 345–360 is cleaved from the precursor; sequence SGEVQPIALTAPAIAS.

The protein belongs to the reaction center PufL/M/PsbA/D family. As to quaternary structure, PSII is composed of 1 copy each of membrane proteins PsbA, PsbB, PsbC, PsbD, PsbE, PsbF, PsbH, PsbI, PsbJ, PsbK, PsbL, PsbM, PsbT, PsbX, PsbY, PsbZ, Psb30/Ycf12, peripheral proteins PsbO, CyanoQ (PsbQ), PsbU, PsbV and a large number of cofactors. It forms dimeric complexes. Requires The D1/D2 heterodimer binds P680, chlorophylls that are the primary electron donor of PSII, and subsequent electron acceptors. It shares a non-heme iron and each subunit binds pheophytin, quinone, additional chlorophylls, carotenoids and lipids. D1 provides most of the ligands for the Mn4-Ca-O5 cluster of the oxygen-evolving complex (OEC). There is also a Cl(-1) ion associated with D1 and D2, which is required for oxygen evolution. The PSII complex binds additional chlorophylls, carotenoids and specific lipids. as cofactor. In terms of processing, tyr-161 forms a radical intermediate that is referred to as redox-active TyrZ, YZ or Y-Z. Post-translationally, C-terminally processed by CtpA; processing is essential to allow assembly of the oxygen-evolving complex and thus photosynthetic growth.

It localises to the cellular thylakoid membrane. The enzyme catalyses 2 a plastoquinone + 4 hnu + 2 H2O = 2 a plastoquinol + O2. Its function is as follows. Photosystem II (PSII) is a light-driven water:plastoquinone oxidoreductase that uses light energy to abstract electrons from H(2)O, generating O(2) and a proton gradient subsequently used for ATP formation. It consists of a core antenna complex that captures photons, and an electron transfer chain that converts photonic excitation into a charge separation. The D1/D2 (PsbA/PsbD) reaction center heterodimer binds P680, the primary electron donor of PSII as well as several subsequent electron acceptors. This chain is Photosystem II protein D1 3, found in Nostoc sp. (strain PCC 7120 / SAG 25.82 / UTEX 2576).